A 286-amino-acid polypeptide reads, in one-letter code: NAD kinase (286 aa).

The active-site Proton acceptor is the Asp74. Residues 74 to 75 (DG), 148 to 149 (ND), Asp178, Ala186, 189 to 194 (TAYNLS), and Gln244 each bind NAD(+).

Belongs to the NAD kinase family. Requires a divalent metal cation as cofactor.

It is found in the cytoplasm. The catalysed reaction is NAD(+) + ATP = ADP + NADP(+) + H(+). Functionally, involved in the regulation of the intracellular balance of NAD and NADP, and is a key enzyme in the biosynthesis of NADP. Catalyzes specifically the phosphorylation on 2'-hydroxyl of the adenosine moiety of NAD to yield NADP. The sequence is that of NAD kinase from Campylobacter jejuni subsp. jejuni serotype O:6 (strain 81116 / NCTC 11828).